Reading from the N-terminus, the 217-residue chain is Thymidylate kinase (217 aa).

16-23 provides a ligand contact to ATP; sequence GIDGAGKT.

The protein belongs to the thymidylate kinase family.

The catalysed reaction is dTMP + ATP = dTDP + ADP. Its function is as follows. Phosphorylation of dTMP to form dTDP in both de novo and salvage pathways of dTTP synthesis. This is Thymidylate kinase from Xylella fastidiosa (strain M12).